A 391-amino-acid polypeptide reads, in one-letter code: Nuclear hormone receptor family member nhr-218 (391 aa).

A DNA-binding region (nuclear receptor) is located at residues Pro-17 to Gln-93. NR C4-type zinc fingers lie at residues Cys-20 to Cys-40 and Cys-56 to Cys-76. The region spanning Ser-146–Lys-391 is the NR LBD domain.

It belongs to the nuclear hormone receptor family.

The protein localises to the nucleus. Its function is as follows. Orphan nuclear receptor. In Caenorhabditis elegans, this protein is Nuclear hormone receptor family member nhr-218 (nhr-218).